We begin with the raw amino-acid sequence, 255 residues long: Hydroxyacylglutathione hydrolase (255 aa).

Zn(2+)-binding residues include His56, His58, Asp60, His61, His114, Asp133, and His171.

It belongs to the metallo-beta-lactamase superfamily. Glyoxalase II family. As to quaternary structure, monomer. It depends on Zn(2+) as a cofactor.

It catalyses the reaction an S-(2-hydroxyacyl)glutathione + H2O = a 2-hydroxy carboxylate + glutathione + H(+). It functions in the pathway secondary metabolite metabolism; methylglyoxal degradation; (R)-lactate from methylglyoxal: step 2/2. Thiolesterase that catalyzes the hydrolysis of S-D-lactoyl-glutathione to form glutathione and D-lactic acid. This Rhodopseudomonas palustris (strain BisB18) protein is Hydroxyacylglutathione hydrolase.